We begin with the raw amino-acid sequence, 529 residues long: Mannuronan C5-epimerase (529 aa).

Residues 1–30 (MGACAMNPQALKGSAMLAAAMLLASGAAMA) form the signal peptide. PbH1 repeat units lie at residues 229–256 (GTET…SISQ), 291–313 (TTGF…DPHD), 315–338 (SHGL…IISR), 340–362 (VNDS…VLDR), 364–386 (SVNN…TLYE), and 387–409 (SGDN…RVRN). Histidine 312 serves as the catalytic Proton acceptor.

The protein belongs to the D-mannuronate C5-epimerase family.

It localises to the periplasm. The catalysed reaction is [(1-&gt;4)-beta-D-mannuronosyl](n) = [alginate](n). It functions in the pathway glycan biosynthesis; alginate biosynthesis. Catalyzes the epimerization of beta-D-mannuronate to alpha-L-guluronate during the synthesis of the linear polysaccharide alginate. In addition, is part of a periplasmic protein complex that protects alginate from degradation by AlgL by channeling the newly formed alginate polymer through a scaffold that transfers the alginate polymer through the periplasmic space to the outer membrane secretin AlgE. The sequence is that of Mannuronan C5-epimerase from Pseudomonas fluorescens.